Here is a 339-residue protein sequence, read N- to C-terminus: Ketol-acid reductoisomerase (NADP(+)) (339 aa).

A KARI N-terminal Rossmann domain is found at 1–182; that stretch reads MRVYYDRDAD…GGGRSGIIET (182 aa). Residues 24-27, Lys48, Ser51, Thr53, and 83-86 each bind NADP(+); these read YGSQ and DELQ. His108 is an active-site residue. Gly134 contributes to the NADP(+) binding site. A KARI C-terminal knotted domain is found at 183–328; it reads NFREECETDL…AKLRGMMPWI (146 aa). Residues Asp191, Glu195, Glu227, and Glu231 each contribute to the Mg(2+) site. Ser252 contributes to the substrate binding site.

Belongs to the ketol-acid reductoisomerase family. Requires Mg(2+) as cofactor.

It catalyses the reaction (2R)-2,3-dihydroxy-3-methylbutanoate + NADP(+) = (2S)-2-acetolactate + NADPH + H(+). The enzyme catalyses (2R,3R)-2,3-dihydroxy-3-methylpentanoate + NADP(+) = (S)-2-ethyl-2-hydroxy-3-oxobutanoate + NADPH + H(+). Its pathway is amino-acid biosynthesis; L-isoleucine biosynthesis; L-isoleucine from 2-oxobutanoate: step 2/4. The protein operates within amino-acid biosynthesis; L-valine biosynthesis; L-valine from pyruvate: step 2/4. In terms of biological role, involved in the biosynthesis of branched-chain amino acids (BCAA). Catalyzes an alkyl-migration followed by a ketol-acid reduction of (S)-2-acetolactate (S2AL) to yield (R)-2,3-dihydroxy-isovalerate. In the isomerase reaction, S2AL is rearranged via a Mg-dependent methyl migration to produce 3-hydroxy-3-methyl-2-ketobutyrate (HMKB). In the reductase reaction, this 2-ketoacid undergoes a metal-dependent reduction by NADPH to yield (R)-2,3-dihydroxy-isovalerate. This Rhizobium johnstonii (strain DSM 114642 / LMG 32736 / 3841) (Rhizobium leguminosarum bv. viciae) protein is Ketol-acid reductoisomerase (NADP(+)).